Reading from the N-terminus, the 436-residue chain is Tol-Pal system protein TolB (436 aa).

Residues 1–28 (MMKCSFFRAILVAVGLMAAAVVATPANA) form the signal peptide.

This sequence belongs to the TolB family. The Tol-Pal system is composed of five core proteins: the inner membrane proteins TolA, TolQ and TolR, the periplasmic protein TolB and the outer membrane protein Pal. They form a network linking the inner and outer membranes and the peptidoglycan layer.

Its subcellular location is the periplasm. Functionally, part of the Tol-Pal system, which plays a role in outer membrane invagination during cell division and is important for maintaining outer membrane integrity. The sequence is that of Tol-Pal system protein TolB from Rhizobium etli (strain CIAT 652).